The chain runs to 197 residues: uncharacterized protein (197 aa).

Helical transmembrane passes span 30 to 50 (WVAMGATAITVLAGAHIVEMA), 61 to 81 (LVAGASVVFWAFGPWLIPPLV), 101 to 121 (LWSVVFPLGMYGVGAYRLGLA), and 130 to 150 (IGEFEGWVALAVWTITFVAML).

The protein resides in the cell membrane. This is an uncharacterized protein from Mycobacterium tuberculosis (strain CDC 1551 / Oshkosh).